The sequence spans 499 residues: Thioredoxin reductase 1, cytoplasmic (499 aa).

FAD-binding positions include 18 to 23 (IGGGSG), 42 to 43 (DF), 58 to 59 (TC), and 63 to 67 (GCIPK). The cysteines at positions 59 and 64 are disulfide-linked. Lys-68 is modified (N6-succinyllysine). A Phosphotyrosine modification is found at Tyr-131. FAD contacts are provided by residues 131–132 (YG) and Thr-161. Residues Arg-166, 198–204 (ASYVALE), 221–222 (RS), Arg-226, 226–228 (RGF), 291–293 (VGR), and Lys-315 contribute to the NADP(+) site. Position 200 (Tyr-200) interacts with FAD. FAD is bound by residues Asp-334, 341–343 (ELT), and His-472. Position 341 (Glu-341) interacts with NADP(+). His-472 serves as the catalytic Proton acceptor. The cysteinyl-selenocysteine (Cys-Sec) cross-link spans 497-498 (CU). A non-standard amino acid (selenocysteine) is located at residue Sec-498.

It belongs to the class-I pyridine nucleotide-disulfide oxidoreductase family. In terms of assembly, homodimer. FAD is required as a cofactor. In terms of processing, ISGylated.

It localises to the cytoplasm. The catalysed reaction is [thioredoxin]-dithiol + NADP(+) = [thioredoxin]-disulfide + NADPH + H(+). It catalyses the reaction H2O2 + NADPH + H(+) = NADP(+) + 2 H2O. Functionally, reduces disulfideprotein thioredoxin (Trx) to its dithiol-containing form. Homodimeric flavoprotein involved in the regulation of cellular redox reactions, growth and differentiation. Contains a selenocysteine residue at the C-terminal active site that is essential for catalysis. Also has reductase activity on hydrogen peroxide (H2O2). The protein is Thioredoxin reductase 1, cytoplasmic of Rattus norvegicus (Rat).